We begin with the raw amino-acid sequence, 620 residues long: 1-deoxy-D-xylulose-5-phosphate synthase (620 aa).

Thiamine diphosphate is bound by residues H80 and 121–123 (GHS). D152 is a binding site for Mg(2+). Thiamine diphosphate contacts are provided by residues 153-154 (GA), N181, Y288, and E370. A Mg(2+)-binding site is contributed by N181.

It belongs to the transketolase family. DXPS subfamily. As to quaternary structure, homodimer. Requires Mg(2+) as cofactor. The cofactor is thiamine diphosphate.

The catalysed reaction is D-glyceraldehyde 3-phosphate + pyruvate + H(+) = 1-deoxy-D-xylulose 5-phosphate + CO2. It functions in the pathway metabolic intermediate biosynthesis; 1-deoxy-D-xylulose 5-phosphate biosynthesis; 1-deoxy-D-xylulose 5-phosphate from D-glyceraldehyde 3-phosphate and pyruvate: step 1/1. Catalyzes the acyloin condensation reaction between C atoms 2 and 3 of pyruvate and glyceraldehyde 3-phosphate to yield 1-deoxy-D-xylulose-5-phosphate (DXP). The chain is 1-deoxy-D-xylulose-5-phosphate synthase from Escherichia fergusonii (strain ATCC 35469 / DSM 13698 / CCUG 18766 / IAM 14443 / JCM 21226 / LMG 7866 / NBRC 102419 / NCTC 12128 / CDC 0568-73).